Consider the following 178-residue polypeptide: ATP synthase subunit delta (178 aa).

Belongs to the ATPase delta chain family. In terms of assembly, F-type ATPases have 2 components, F(1) - the catalytic core - and F(0) - the membrane proton channel. F(1) has five subunits: alpha(3), beta(3), gamma(1), delta(1), epsilon(1). F(0) has three main subunits: a(1), b(2) and c(10-14). The alpha and beta chains form an alternating ring which encloses part of the gamma chain. F(1) is attached to F(0) by a central stalk formed by the gamma and epsilon chains, while a peripheral stalk is formed by the delta and b chains.

The protein localises to the cell inner membrane. In terms of biological role, f(1)F(0) ATP synthase produces ATP from ADP in the presence of a proton or sodium gradient. F-type ATPases consist of two structural domains, F(1) containing the extramembraneous catalytic core and F(0) containing the membrane proton channel, linked together by a central stalk and a peripheral stalk. During catalysis, ATP synthesis in the catalytic domain of F(1) is coupled via a rotary mechanism of the central stalk subunits to proton translocation. Its function is as follows. This protein is part of the stalk that links CF(0) to CF(1). It either transmits conformational changes from CF(0) to CF(1) or is implicated in proton conduction. This chain is ATP synthase subunit delta, found in Aromatoleum aromaticum (strain DSM 19018 / LMG 30748 / EbN1) (Azoarcus sp. (strain EbN1)).